Here is a 357-residue protein sequence, read N- to C-terminus: Peptide chain release factor 1 (357 aa).

An N5-methylglutamine modification is found at Gln234.

This sequence belongs to the prokaryotic/mitochondrial release factor family. In terms of processing, methylated by PrmC. Methylation increases the termination efficiency of RF1.

It is found in the cytoplasm. Peptide chain release factor 1 directs the termination of translation in response to the peptide chain termination codons UAG and UAA. The chain is Peptide chain release factor 1 from Frankia casuarinae (strain DSM 45818 / CECT 9043 / HFP020203 / CcI3).